The sequence spans 165 residues: Nucleotide-binding protein P9515_05441 (165 aa).

The protein belongs to the YajQ family.

Functionally, nucleotide-binding protein. This is Nucleotide-binding protein P9515_05441 from Prochlorococcus marinus (strain MIT 9515).